We begin with the raw amino-acid sequence, 274 residues long: Large ribosomal subunit protein uL2 (274 aa).

The segment at 223 to 274 (VAMNPVDHPHGGGEGRTGEGRHAVDPWGNLTKGYRTRNNKRTQSMIVSRRKK) is disordered. A compositionally biased stretch (basic and acidic residues) spans 229–246 (DHPHGGGEGRTGEGRHAV).

It belongs to the universal ribosomal protein uL2 family. In terms of assembly, part of the 50S ribosomal subunit. Forms a bridge to the 30S subunit in the 70S ribosome.

Functionally, one of the primary rRNA binding proteins. Required for association of the 30S and 50S subunits to form the 70S ribosome, for tRNA binding and peptide bond formation. It has been suggested to have peptidyltransferase activity; this is somewhat controversial. Makes several contacts with the 16S rRNA in the 70S ribosome. The polypeptide is Large ribosomal subunit protein uL2 (Verminephrobacter eiseniae (strain EF01-2)).